The chain runs to 58 residues: Probable spore germination protein GerPD (58 aa).

Its function is as follows. Required for the formation of functionally normal spores. Could be involved in the establishment of normal spore coat structure and/or permeability, which allows the access of germinants to their receptor. The polypeptide is Probable spore germination protein GerPD (gerPD) (Bacillus subtilis (strain 168)).